A 428-amino-acid chain; its full sequence is 3-phosphoshikimate 1-carboxyvinyltransferase (428 aa).

3-phosphoshikimate is bound by residues Lys-23, Ser-24, and Arg-28. Lys-23 provides a ligand contact to phosphoenolpyruvate. Phosphoenolpyruvate-binding residues include Gly-97 and Arg-125. Residues Ser-170, Ser-171, Gln-172, Ser-198, Asp-314, Asn-337, and Lys-341 each coordinate 3-phosphoshikimate. Residue Gln-172 participates in phosphoenolpyruvate binding. Asp-314 serves as the catalytic Proton acceptor. Residues Arg-345, Arg-387, and Lys-412 each contribute to the phosphoenolpyruvate site.

This sequence belongs to the EPSP synthase family. In terms of assembly, monomer.

Its subcellular location is the cytoplasm. It carries out the reaction 3-phosphoshikimate + phosphoenolpyruvate = 5-O-(1-carboxyvinyl)-3-phosphoshikimate + phosphate. Its pathway is metabolic intermediate biosynthesis; chorismate biosynthesis; chorismate from D-erythrose 4-phosphate and phosphoenolpyruvate: step 6/7. In terms of biological role, catalyzes the transfer of the enolpyruvyl moiety of phosphoenolpyruvate (PEP) to the 5-hydroxyl of shikimate-3-phosphate (S3P) to produce enolpyruvyl shikimate-3-phosphate and inorganic phosphate. This is 3-phosphoshikimate 1-carboxyvinyltransferase from Erwinia tasmaniensis (strain DSM 17950 / CFBP 7177 / CIP 109463 / NCPPB 4357 / Et1/99).